Reading from the N-terminus, the 200-residue chain is DNA dC-&gt;dU-editing enzyme APOBEC-3H (200 aa).

Residues 4–126 (LTAETFRLQF…KPQQKGLRLL (123 aa)) enclose the CMP/dCMP-type deaminase domain. His54 lines the Zn(2+) pocket. Glu56 acts as the Proton donor in catalysis. Residues Cys85 and Cys88 each contribute to the Zn(2+) site. Residues 160–182 (YKMLEELDKNSRAIKRRLERIKI) are a coiled coil.

The protein belongs to the cytidine and deoxycytidylate deaminase family. Homodimer. Interacts with AGO1, AGO2 and AGO3. Zn(2+) serves as cofactor. Post-translationally, (Microbial infection) Following infection by some HIV-1 strains, such as isolate BRU/LAI, can be ubiquitinated by a cullin-5-RING E3 ubiquitin-protein ligase complex (ECS complex) hijacked by the HIV-1 Vif protein, leading to its degradation. Ubiquitination by the ECS complex is however less efficent compared to APOBEC3G or APOBEC3G. In terms of tissue distribution, expressed in lymphoid organs. Also detected in non-lymphoid tissues including lung, testis, ovary, fetal liver and skin.

It localises to the cytoplasm. Its subcellular location is the nucleus. The protein resides in the P-body. It carries out the reaction a 2'-deoxycytidine in single-stranded DNA + H2O + H(+) = a 2'-deoxyuridine in single-stranded DNA + NH4(+). Its activity is regulated as follows. APOBEC3H activity is regulated by RNA. While RNA-binding inhibits the DNA deaminase activity, double-stranded RNA is required for HIV-1 restriction by promoting APOBEC3H homodimerization and packaging into retroviral nucleocapsids. With respect to regulation, (Microbial infection) Antiviral activity is inhibited to some extent by the HIV-1 virion infectivity factor (VIF), that prevents its incorporation into progeny virions by both inhibiting its translation and/or by inducing its ubiquitination and subsequent degradation by the 26S proteasome. Its function is as follows. DNA deaminase (cytidine deaminase) which acts as an inhibitor of retrovirus replication and retrotransposon mobility via deaminase-dependent and -independent mechanisms. The A3H-var/haplotype 2 exhibits antiviral activity against vif-deficient HIV-1. After the penetration of retroviral nucleocapsids into target cells of infection and the initiation of reverse transcription, it can induce the conversion of cytosine to uracil in the minus-sense single-strand viral DNA, leading to G-to-A hypermutations in the subsequent plus-strand viral DNA. The resultant detrimental levels of mutations in the proviral genome, along with a deamination-independent mechanism that works prior to the proviral integration, together exert efficient antiretroviral effects in infected target cells. Selectively targets single-stranded DNA and does not deaminate double-stranded DNA or single- or double-stranded RNA. Exhibits antiviral activity also against T-cell leukemia virus type 1 (HTLV-1) and may inhibit the mobility of LTR and non-LTR retrotransposons. The sequence is that of DNA dC-&gt;dU-editing enzyme APOBEC-3H from Homo sapiens (Human).